Reading from the N-terminus, the 397-residue chain is Argininosuccinate synthase (397 aa).

An ATP-binding site is contributed by 8–16 (AYSGGLDTS). Residues tyrosine 86 and serine 91 each coordinate L-citrulline. Glycine 116 provides a ligand contact to ATP. Residues threonine 118, asparagine 122, and aspartate 123 each coordinate L-aspartate. Asparagine 122 contributes to the L-citrulline binding site. L-citrulline is bound by residues arginine 126, serine 175, serine 184, glutamate 260, and tyrosine 272.

It belongs to the argininosuccinate synthase family. Type 1 subfamily. Homotetramer.

The protein resides in the cytoplasm. The enzyme catalyses L-citrulline + L-aspartate + ATP = 2-(N(omega)-L-arginino)succinate + AMP + diphosphate + H(+). The protein operates within amino-acid biosynthesis; L-arginine biosynthesis; L-arginine from L-ornithine and carbamoyl phosphate: step 2/3. This Clostridium botulinum (strain Langeland / NCTC 10281 / Type F) protein is Argininosuccinate synthase.